The chain runs to 240 residues: RNA-binding protein pno1 (240 aa).

Over residues Met1–Lys15 the composition is skewed to basic and acidic residues. A disordered region spans residues Met1–Ser61. A KH domain is found at Gln164–Val213.

This sequence belongs to the PNO1 family.

It localises to the nucleus. It is found in the nucleolus. This chain is RNA-binding protein pno1 (l(1)G0004), found in Drosophila melanogaster (Fruit fly).